A 106-amino-acid chain; its full sequence is Cytochrome c2 (106 aa).

Residues C19, C22, H23, and M84 each coordinate heme c.

The protein belongs to the cytochrome c family. Binds 1 heme c group covalently per subunit.

This Rhodopila globiformis (Rhodopseudomonas globiformis) protein is Cytochrome c2.